We begin with the raw amino-acid sequence, 542 residues long: Glucose-6-phosphate isomerase (542 aa).

The active-site Proton donor is the E353. Residues H384 and K508 contribute to the active site.

Belongs to the GPI family.

The protein localises to the cytoplasm. The catalysed reaction is alpha-D-glucose 6-phosphate = beta-D-fructose 6-phosphate. It functions in the pathway carbohydrate biosynthesis; gluconeogenesis. Its pathway is carbohydrate degradation; glycolysis; D-glyceraldehyde 3-phosphate and glycerone phosphate from D-glucose: step 2/4. Functionally, catalyzes the reversible isomerization of glucose-6-phosphate to fructose-6-phosphate. The polypeptide is Glucose-6-phosphate isomerase (Corynebacterium efficiens (strain DSM 44549 / YS-314 / AJ 12310 / JCM 11189 / NBRC 100395)).